The following is a 108-amino-acid chain: Phosphoribosyl-AMP cyclohydrolase (108 aa).

D78 is a Mg(2+) binding site. C79 serves as a coordination point for Zn(2+). Positions 80 and 82 each coordinate Mg(2+). The Zn(2+) site is built by C95 and C102.

It belongs to the PRA-CH family. As to quaternary structure, homodimer. Requires Mg(2+) as cofactor. It depends on Zn(2+) as a cofactor.

The protein resides in the cytoplasm. It carries out the reaction 1-(5-phospho-beta-D-ribosyl)-5'-AMP + H2O = 1-(5-phospho-beta-D-ribosyl)-5-[(5-phospho-beta-D-ribosylamino)methylideneamino]imidazole-4-carboxamide. The protein operates within amino-acid biosynthesis; L-histidine biosynthesis; L-histidine from 5-phospho-alpha-D-ribose 1-diphosphate: step 3/9. In terms of biological role, catalyzes the hydrolysis of the adenine ring of phosphoribosyl-AMP. This chain is Phosphoribosyl-AMP cyclohydrolase, found in Nitrosopumilus maritimus (strain SCM1).